A 718-amino-acid polypeptide reads, in one-letter code: Putative methyltransferase NSUN7 (718 aa).

C439 acts as the Nucleophile in catalysis. Disordered regions lie at residues 536–557, 578–616, and 694–718; these read GKSSKREKKKKKSKTSLTKGAT, ANLSETVTKPPLPQKNTAQVGASSQTRKPNKLAPHPAVP, and SLSRKEEKPKDDTPSSLLRPPRRWL. Over residues 538-549 the composition is skewed to basic residues; that stretch reads SSKREKKKKKSK. Residues 591 to 604 show a composition bias toward polar residues; it reads QKNTAQVGASSQTR. The span at 696–706 shows a compositional bias: basic and acidic residues; that stretch reads SRKEEKPKDDT.

It belongs to the class I-like SAM-binding methyltransferase superfamily. RsmB/NOP family.

Its function is as follows. May have S-adenosyl-L-methionine-dependent methyl-transferase activity. The sequence is that of Putative methyltransferase NSUN7 (NSUN7) from Homo sapiens (Human).